The following is a 143-amino-acid chain: Ribosome-binding factor A (143 aa).

The tract at residues Val-123–Asn-143 is disordered. Low complexity predominate over residues Arg-124 to Ala-136.

Belongs to the RbfA family. In terms of assembly, monomer. Binds 30S ribosomal subunits, but not 50S ribosomal subunits or 70S ribosomes.

It is found in the cytoplasm. Its function is as follows. One of several proteins that assist in the late maturation steps of the functional core of the 30S ribosomal subunit. Associates with free 30S ribosomal subunits (but not with 30S subunits that are part of 70S ribosomes or polysomes). Required for efficient processing of 16S rRNA. May interact with the 5'-terminal helix region of 16S rRNA. The protein is Ribosome-binding factor A of Corynebacterium urealyticum (strain ATCC 43042 / DSM 7109).